The primary structure comprises 361 residues: RLA class I histocompatibility antigen, alpha chain 11/11 (361 aa).

The first 24 residues, 1–24 (MGSMAPRTLLLLLAGALTLKDTQA), serve as a signal peptide directing secretion. The segment at 25 to 114 (GSHSMRYFYT…ALRYYNQSAA (90 aa)) is alpha-1. Residues 25 to 308 (GSHSMRYFYT…EPPAQPTALI (284 aa)) are Extracellular-facing. Asn110 is a glycosylation site (N-linked (GlcNAc...) asparagine). The alpha-2 stretch occupies residues 115–206 (GSHTFQTMFG…EMGKETLQRA (92 aa)). Intrachain disulfides connect Cys125/Cys188 and Cys227/Cys283. Positions 207-298 (DPPKAHVTHH…GLPEPLTLTW (92 aa)) are alpha-3. The 89-residue stretch at 209-297 (PKAHVTHHPA…EGLPEPLTLT (89 aa)) folds into the Ig-like C1-type domain. The tract at residues 299-308 (EPPAQPTALI) is connecting peptide. The chain crosses the membrane as a helical span at residues 309–329 (VGIVAGVLGVLLILGAVVAVV). Residues 330–361 (RRKKHSSDGKGGRYTPAAGGHRDQGSDDSLMP) lie on the Cytoplasmic side of the membrane. A disordered region spans residues 335-361 (SSDGKGGRYTPAAGGHRDQGSDDSLMP). Phosphoserine occurs at positions 355 and 358.

This sequence belongs to the MHC class I family. Heterodimer of an alpha chain and a beta chain (beta-2-microglobulin).

It localises to the membrane. Involved in the presentation of foreign antigens to the immune system. The protein is RLA class I histocompatibility antigen, alpha chain 11/11 of Oryctolagus cuniculus (Rabbit).